The following is a 211-amino-acid chain: Small ribosomal subunit protein uS3 (211 aa).

The region spanning 16–85 (IDEYFKTKLV…NPQIEVKQVE (70 aa)) is the KH type-2 domain.

The protein belongs to the universal ribosomal protein uS3 family. In terms of assembly, part of the 30S ribosomal subunit.

Functionally, binds the lower part of the 30S subunit head. The protein is Small ribosomal subunit protein uS3 of Methanococcus maripaludis (strain DSM 14266 / JCM 13030 / NBRC 101832 / S2 / LL).